Reading from the N-terminus, the 61-residue chain is Large ribosomal subunit protein uL30 (61 aa).

The protein belongs to the universal ribosomal protein uL30 family. Part of the 50S ribosomal subunit.

This is Large ribosomal subunit protein uL30 from Bordetella petrii (strain ATCC BAA-461 / DSM 12804 / CCUG 43448).